The sequence spans 347 residues: D-alanine--D-alanine ligase (347 aa).

The ATP-grasp domain occupies 131-333 (KRVLESAGIA…YPKLIERLVD (203 aa)). 161 to 216 (EEKLAYPVFTKPSNMGSSVGISKSENQEELRQALKLAFRYDSRVLVEQGVNAREIE) is an ATP binding site. Mg(2+) contacts are provided by D287, E300, and N302.

This sequence belongs to the D-alanine--D-alanine ligase family. Mg(2+) is required as a cofactor. Mn(2+) serves as cofactor.

Its subcellular location is the cytoplasm. It carries out the reaction 2 D-alanine + ATP = D-alanyl-D-alanine + ADP + phosphate + H(+). It functions in the pathway cell wall biogenesis; peptidoglycan biosynthesis. In terms of biological role, cell wall formation. The sequence is that of D-alanine--D-alanine ligase from Streptococcus pneumoniae serotype 4 (strain ATCC BAA-334 / TIGR4).